The chain runs to 361 residues: MKPSIHSLTHQTMQEWVLEQGEKKFRADQIWEWLYRKRVQSFEEMTNLSKDLIAKLNDQFVVNPLKQRIVQESADGTVKYLFELPDGMLIETVLMRQHYGLSVCVTTQVGCNIGCTFCASGLIKKQRDLNNGEIVAQIMLVQKYFDERGQDERVSHIVVMGIGEPFDNYNNVLNFFRTINDDKGMAIGARHITVSTLGLAHKIRDFADEGVQVNLAVSLHAPNNELRSSIMKINRAFPIEKLFAAIEYYIETTNRRVTFEYIMLNEVNDGVEQALELAELLKNIKKLSYVNLISYNPVSEHDQYSRSPKERVLAFYDTLKKKGGNCVVRQEHGTDIDAACGQLRSNTMKRDRQKAVAAVNP.

The active-site Proton acceptor is the Glu-91. The 233-residue stretch at Gln-97–Arg-329 folds into the Radical SAM core domain. A disulfide bond links Cys-104 and Cys-340. [4Fe-4S] cluster contacts are provided by Cys-111, Cys-115, and Cys-118. S-adenosyl-L-methionine is bound by residues Gly-163–Glu-164, Ser-195, Ser-218–His-220, and Asn-296. The active-site S-methylcysteine intermediate is Cys-340.

Belongs to the radical SAM superfamily. RlmN family. It depends on [4Fe-4S] cluster as a cofactor.

Its subcellular location is the cytoplasm. The catalysed reaction is adenosine(2503) in 23S rRNA + 2 reduced [2Fe-2S]-[ferredoxin] + 2 S-adenosyl-L-methionine = 2-methyladenosine(2503) in 23S rRNA + 5'-deoxyadenosine + L-methionine + 2 oxidized [2Fe-2S]-[ferredoxin] + S-adenosyl-L-homocysteine. It catalyses the reaction adenosine(37) in tRNA + 2 reduced [2Fe-2S]-[ferredoxin] + 2 S-adenosyl-L-methionine = 2-methyladenosine(37) in tRNA + 5'-deoxyadenosine + L-methionine + 2 oxidized [2Fe-2S]-[ferredoxin] + S-adenosyl-L-homocysteine. In terms of biological role, specifically methylates position 2 of adenine 2503 in 23S rRNA and position 2 of adenine 37 in tRNAs. In Streptococcus pneumoniae (strain Hungary19A-6), this protein is Probable dual-specificity RNA methyltransferase RlmN.